A 137-amino-acid polypeptide reads, in one-letter code: Small ribosomal subunit protein uS9 (137 aa).

The segment at 104–137 is disordered; the sequence is PLKSEGYLTRDPRAKERKKYGLHKARKAPQYSKR. The segment covering 118–137 has biased composition (basic residues); sequence KERKKYGLHKARKAPQYSKR.

This sequence belongs to the universal ribosomal protein uS9 family.

This is Small ribosomal subunit protein uS9 from Gloeothece citriformis (strain PCC 7424) (Cyanothece sp. (strain PCC 7424)).